A 280-amino-acid chain; its full sequence is MEVITNPGQMQTLMLSLKKQGKKIGFVPTMGYLHEGHLSLIRCSKKENDITVVSIFVNPIQFGANEDFGRYPRDFERDKSLCEKENVDYIFYPSYEEMYPDGFQTYVEVAELSKGLCGDFRPGHFKGVATVVAKLFNIVCPDNVYFGKKDFQQLKVIQRMVKDLNFPVNVVGCPVVREPDGLAMSSRNKYLSDEERESALNISKALFEAKRMFEDGITDPNLIKERVRQIISQAKHLKEIQYVEIVDSNTLKPVDKVKKSDVLAVAVYIGNTRLIDNIEF.

30-37 (MGYLHEGH) serves as a coordination point for ATP. His-37 functions as the Proton donor in the catalytic mechanism. A (R)-pantoate-binding site is contributed by Gln-61. Residue Gln-61 participates in beta-alanine binding. 147 to 150 (GKKD) contacts ATP. Gln-153 contacts (R)-pantoate. Residues Val-176 and 184–187 (MSSR) contribute to the ATP site.

Belongs to the pantothenate synthetase family. In terms of assembly, homodimer.

Its subcellular location is the cytoplasm. The enzyme catalyses (R)-pantoate + beta-alanine + ATP = (R)-pantothenate + AMP + diphosphate + H(+). Its pathway is cofactor biosynthesis; (R)-pantothenate biosynthesis; (R)-pantothenate from (R)-pantoate and beta-alanine: step 1/1. Functionally, catalyzes the condensation of pantoate with beta-alanine in an ATP-dependent reaction via a pantoyl-adenylate intermediate. This is Pantothenate synthetase from Sulfurihydrogenibium sp. (strain YO3AOP1).